We begin with the raw amino-acid sequence, 163 residues long: Epididymal-specific lipocalin-6 (163 aa).

The N-terminal stretch at 1–20 (MGGLLLAAFLALVSVPRAQA) is a signal peptide.

This sequence belongs to the calycin superfamily. Lipocalin family. As to expression, predominantly expressed in epididymis.

Its subcellular location is the secreted. In terms of biological role, may play a role in male fertility. In Homo sapiens (Human), this protein is Epididymal-specific lipocalin-6 (LCN6).